Reading from the N-terminus, the 137-residue chain is Small ribosomal subunit protein uS12 (137 aa).

Disordered regions lie at residues 1–21 (MPTI…KSDS) and 34–57 (VHTK…TPKK). At Asp102 the chain carries 3-methylthioaspartic acid.

The protein belongs to the universal ribosomal protein uS12 family. Part of the 30S ribosomal subunit. Contacts proteins S8 and S17. May interact with IF1 in the 30S initiation complex.

Its function is as follows. With S4 and S5 plays an important role in translational accuracy. Functionally, interacts with and stabilizes bases of the 16S rRNA that are involved in tRNA selection in the A site and with the mRNA backbone. Located at the interface of the 30S and 50S subunits, it traverses the body of the 30S subunit contacting proteins on the other side and probably holding the rRNA structure together. The combined cluster of proteins S8, S12 and S17 appears to hold together the shoulder and platform of the 30S subunit. In Streptococcus equi subsp. zooepidemicus (strain H70), this protein is Small ribosomal subunit protein uS12.